The following is a 504-amino-acid chain: ATP synthase subunit alpha, chloroplastic (504 aa).

170–177 (GDRQTGKT) contacts ATP.

It belongs to the ATPase alpha/beta chains family. In terms of assembly, F-type ATPases have 2 components, CF(1) - the catalytic core - and CF(0) - the membrane proton channel. CF(1) has five subunits: alpha(3), beta(3), gamma(1), delta(1), epsilon(1). CF(0) has four main subunits: a, b, b' and c.

The protein localises to the plastid. The protein resides in the chloroplast thylakoid membrane. The catalysed reaction is ATP + H2O + 4 H(+)(in) = ADP + phosphate + 5 H(+)(out). Its function is as follows. Produces ATP from ADP in the presence of a proton gradient across the membrane. The alpha chain is a regulatory subunit. The sequence is that of ATP synthase subunit alpha, chloroplastic from Ostreococcus tauri.